We begin with the raw amino-acid sequence, 360 residues long: Uptake hydrogenase small subunit (360 aa).

The tat-type signal signal peptide spans 1–43 (MVETFYEVMRRQGISRRSFLKYCSLTATSLGLGPSFLPQIAHA). Residues C60, C63, C158, C192, H230, C233, C258, and C264 each coordinate [4Fe-4S] cluster. C273, C292, and C295 together coordinate [3Fe-4S] cluster.

It belongs to the [NiFe]/[NiFeSe] hydrogenase small subunit family. In terms of assembly, heterodimer of a large and a small subunit. [4Fe-4S] cluster is required as a cofactor. Requires [3Fe-4S] cluster as cofactor. Post-translationally, predicted to be exported by the Tat system. The position of the signal peptide cleavage has been experimentally proven.

It is found in the cell membrane. The catalysed reaction is H2 + A = AH2. This enzyme recycles the H(2) produced by nitrogenase to increase the production of ATP and to protect nitrogenase against inhibition or damage by O(2) under carbon- or phosphate-limited conditions. In Cupriavidus necator (strain ATCC 17699 / DSM 428 / KCTC 22496 / NCIMB 10442 / H16 / Stanier 337) (Ralstonia eutropha), this protein is Uptake hydrogenase small subunit (hoxK).